The following is a 532-amino-acid chain: Glucose-6-phosphate isomerase (532 aa).

Glu-330 serves as the catalytic Proton donor. Catalysis depends on residues His-359 and Lys-461.

This sequence belongs to the GPI family.

It localises to the cytoplasm. It carries out the reaction alpha-D-glucose 6-phosphate = beta-D-fructose 6-phosphate. It participates in carbohydrate biosynthesis; gluconeogenesis. It functions in the pathway carbohydrate degradation; glycolysis; D-glyceraldehyde 3-phosphate and glycerone phosphate from D-glucose: step 2/4. Catalyzes the reversible isomerization of glucose-6-phosphate to fructose-6-phosphate. This chain is Glucose-6-phosphate isomerase, found in Synechococcus sp. (strain CC9605).